The chain runs to 360 residues: MLLDKLAFIENKYDELSVKISDPSIMQNQNEWRKLCKEQADLEIIVNAYKEYKQVIEDLQVNKEMLSDESDREMKEMLNEEISSLAEREIELEKEIQILLLPKDPNDDKNVFVEIRGGAGGDEAALFAYNLFRMYTRYAERQRWSTEIMSLNETDIGGFKEVVFMIKGNGAYSKLKYESGVHRVQRVPDTESSGRIHTSTVTVAVLPEVDDVEIEIADKDVRIDVFRASGHGGQCVNTTDSAVRITHLPSGLVVSCQDEKSQLKNKEKAMKVLRSRLFEKAEQERADGIAADRKSQVGTGDRSERIRTYNYPQGRITDHRIGLTLYKLDSFLDGEVQEMINALITADQAEKMQKMGNTEM.

Glutamine 234 carries the N5-methylglutamine modification.

It belongs to the prokaryotic/mitochondrial release factor family. Methylated by PrmC. Methylation increases the termination efficiency of RF1.

The protein resides in the cytoplasm. Peptide chain release factor 1 directs the termination of translation in response to the peptide chain termination codons UAG and UAA. This is Peptide chain release factor 1 from Clostridium botulinum (strain Alaska E43 / Type E3).